Here is a 325-residue protein sequence, read N- to C-terminus: Undecaprenyl-phosphate 4-deoxy-4-formamido-L-arabinose transferase (325 aa).

2 consecutive transmembrane segments (helical) span residues 235-255 (LSVV…LLMV) and 269-291 (VFTL…GLLG).

This sequence belongs to the glycosyltransferase 2 family.

It is found in the cell inner membrane. It catalyses the reaction UDP-4-deoxy-4-formamido-beta-L-arabinose + di-trans,octa-cis-undecaprenyl phosphate = 4-deoxy-4-formamido-alpha-L-arabinopyranosyl di-trans,octa-cis-undecaprenyl phosphate + UDP. It participates in glycolipid biosynthesis; 4-amino-4-deoxy-alpha-L-arabinose undecaprenyl phosphate biosynthesis; 4-amino-4-deoxy-alpha-L-arabinose undecaprenyl phosphate from UDP-4-deoxy-4-formamido-beta-L-arabinose and undecaprenyl phosphate: step 1/2. The protein operates within bacterial outer membrane biogenesis; lipopolysaccharide biosynthesis. Catalyzes the transfer of 4-deoxy-4-formamido-L-arabinose from UDP to undecaprenyl phosphate. The modified arabinose is attached to lipid A and is required for resistance to polymyxin and cationic antimicrobial peptides. Essential for virulence in insects. This chain is Undecaprenyl-phosphate 4-deoxy-4-formamido-L-arabinose transferase, found in Photorhabdus laumondii subsp. laumondii (strain DSM 15139 / CIP 105565 / TT01) (Photorhabdus luminescens subsp. laumondii).